Here is a 639-residue protein sequence, read N- to C-terminus: Versicolorin B synthase stcN (639 aa).

A signal peptide spans 1 to 19; that stretch reads MPAWSLLVLSALPVVGMFA. Residues 77 to 78 and 98 to 99 each bind FAD; these read TA and EA. N-linked (GlcNAc...) asparagine glycosylation is present at N109. 164 to 167 contributes to the FAD binding site; sequence GAML. An N-linked (GlcNAc...) asparagine glycan is attached at N214. Residues 263 to 301 enclose the PAS domain; sequence GFSNGQLLGRSYITHTIHPKTRRRDTASTSYLQTALRTS. N-linked (GlcNAc...) asparagine glycosylation is found at N444 and N501. FAD-binding positions include A609 and 620–621; that span reads PM.

The protein belongs to the GMC oxidoreductase family. As to quaternary structure, homodimer. The cofactor is FAD.

The protein resides in the cytoplasm. It localises to the cytosol. It carries out the reaction (2S-3S)-versiconal hemiacetal = versicolorin B + H2O. The enzyme catalyses (S)-5'-oxoaverantin + H(+) = (1'S,5'S)-averufin + H2O. The protein operates within mycotoxin biosynthesis; sterigmatocystin biosynthesis. Functionally, norsolorinic acid reductase; part of the gene cluster that mediates the biosynthesis of sterigmatocystin (ST), a polyketide-derived furanocoumarin which is part of the most toxic and carcinogenic compounds among the known mycotoxins. The first step in the biosynthesis of sterigmatocystin is the production of hexanoate by the fatty acid synthase (FAS) units stcJ and stcK. The polyketide backbone is assembled by the non-reducing polyketide synthase stcA by condensation of the starter hexanoyl-CoA and 7 malonyl-CoA extender units followed by cyclization and release of norsolorinic acid. Norsolorinic acid is the first stable intermediate in the biosynthesis of sterigmatocystin and is converted into averantin (AVN) by the ketoreductase stcE which reduces the hexanoate ketone to an alcohol. Averantin is then oxidized into 5'-hydroxyaverantin (HAVN) by the cytochrome P450 monooxygenase stcF. 5'-hydroxyaverantin is further converted to 5'-oxyaverantin (OAVN) by the 5'-hydroxyaverantin dehydrogenase stcG. The next step is the conversion of OAVN into averufin (AVF) which is catalyzed by a yet to be identified enzyme. The cytochrome P450 monooxygenase stcB and the flavin-binding monooxygenase stcW are both required for the conversion of averufin to 1-hydroxyversicolorone. The esterase stcI probably catalyzes the formation of versiconal hemiacetal acetate from 1-hydroxyversicolorone. The oxydoreductase stcN then probably catalyzes the biosynthetic step from versiconal to versicolorin B (VERB). The next step is performed by the versicolorin B desaturase stcL to produce versicolorin A (VERA). The ketoreductase stcU and the cytochrome P450 monooxygenase stcS are involved in the conversion of versicolorin A to demethylsterigmatocystin. The Baeyer-Villiger oxidas stcQ and the reductase stcR might be involved in the biosynthetic step from versicolorin A to demethylsterigmatocystin. The final step in the biosynthesis of sterigmatocystin is the methylation of demethylsterigmatocystin catalyzed by the methyltransferase stcP. The protein is Versicolorin B synthase stcN of Emericella nidulans (strain FGSC A4 / ATCC 38163 / CBS 112.46 / NRRL 194 / M139) (Aspergillus nidulans).